The following is a 558-amino-acid chain: Glucose-6-phosphate isomerase (558 aa).

Lys12 is subject to N6-acetyllysine. Phosphoserine occurs at positions 86 and 107. Lys142 is modified (N6-acetyllysine). Position 159-160 (Gly159–Ser160) interacts with D-glucose 6-phosphate. At Ser185 the chain carries Phosphoserine; by CK2. Ser210–Thr215 serves as a coordination point for D-glucose 6-phosphate. Thr250 is subject to Phosphothreonine. Gln354, Glu358, and His389 together coordinate D-glucose 6-phosphate. Glu358 acts as the Proton donor in catalysis. His389 is an active-site residue. Lys454 is subject to N6-acetyllysine; alternate. Lys454 bears the N6-malonyllysine; alternate mark. The residue at position 454 (Lys454) is an N6-succinyllysine; alternate. Position 455 is a phosphoserine (Ser455). Residue Lys519 coordinates D-glucose 6-phosphate. Residue Lys519 is part of the active site.

This sequence belongs to the GPI family. Homodimer; in the catalytically active form. Monomer in the secreted form. Phosphorylation at Ser-185 by CK2 has been shown to decrease enzymatic activity and may contribute to secretion by a non-classical secretory pathway. Post-translationally, ISGylated.

Its subcellular location is the cytoplasm. The protein resides in the secreted. The catalysed reaction is alpha-D-glucose 6-phosphate = beta-D-fructose 6-phosphate. Its pathway is carbohydrate degradation; glycolysis; D-glyceraldehyde 3-phosphate and glycerone phosphate from D-glucose: step 2/4. In the cytoplasm, catalyzes the conversion of glucose-6-phosphate to fructose-6-phosphate, the second step in glycolysis, and the reverse reaction during gluconeogenesis. Besides it's role as a glycolytic enzyme, also acts as a secreted cytokine: acts as an angiogenic factor (AMF) that stimulates endothelial cell motility. Acts as a neurotrophic factor, neuroleukin, for spinal and sensory neurons. It is secreted by lectin-stimulated T-cells and induces immunoglobulin secretion. The chain is Glucose-6-phosphate isomerase from Cricetulus griseus (Chinese hamster).